Here is a 229-residue protein sequence, read N- to C-terminus: 2,3-bisphosphoglycerate-dependent phosphoglycerate mutase 2 (229 aa).

Substrate-binding positions include 8-15 (RHGQSEWN), 21-22 (TG), Arg60, 87-90 (ERHY), Lys98, 114-115 (RR), and 183-184 (GN). His9 (tele-phosphohistidine intermediate) is an active-site residue. The Proton donor/acceptor role is filled by Glu87.

The protein belongs to the phosphoglycerate mutase family. BPG-dependent PGAM subfamily.

The catalysed reaction is (2R)-2-phosphoglycerate = (2R)-3-phosphoglycerate. It functions in the pathway carbohydrate degradation; glycolysis; pyruvate from D-glyceraldehyde 3-phosphate: step 3/5. Functionally, catalyzes the interconversion of 2-phosphoglycerate and 3-phosphoglycerate. The sequence is that of 2,3-bisphosphoglycerate-dependent phosphoglycerate mutase 2 from Latilactobacillus sakei subsp. sakei (strain 23K) (Lactobacillus sakei subsp. sakei).